A 66-amino-acid chain; its full sequence is UPF0370 protein YpfN (66 aa).

A helical transmembrane segment spans residues 4–24 (LAKYWWILVLVFLVGVLLNVI). The disordered stretch occupies residues 39-66 (KPELPPHRDFNDKWDDEEDWPKKDQPKK). Positions 42–51 (LPPHRDFNDK) are enriched in basic and acidic residues.

The protein belongs to the UPF0370 family.

Its subcellular location is the cell membrane. This Salmonella paratyphi A (strain AKU_12601) protein is UPF0370 protein YpfN.